The chain runs to 263 residues: Esterase mokD (263 aa).

Residues Ser134, Asp208, and His236 each act as charge relay system in the active site.

This sequence belongs to the LovG family.

It catalyses the reaction dihydromonacolin L-[lovastatin nonaketide synthase] + H2O = holo-[lovastatin nonaketide synthase] + dihydromonacolin L carboxylate + H(+). It participates in polyketide biosynthesis; lovastatin biosynthesis. Its function is as follows. Esterase; part of the gene cluster that mediates the biosynthesis of monakolin K, also known as lovastatin, and which acts as a potent competitive inhibitor of HMG-CoA reductase. Monakolin K biosynthesis is performed in two stages. The first stage is catalyzed by the nonaketide synthase mokA, which belongs to type I polyketide synthases and catalyzes the iterative nine-step formation of the polyketide. This PKS stage completed by the action of dehydrogenase mokE, which catalyzes the NADPH-dependent reduction of the unsaturated tetra-, penta- and heptaketide intermediates that arise during the mokA-mediated biosynthesis of the nonaketide chain and leads to dihydromonacolin L. Covalently bound dihydromonacolin L is released from mokA by the mokD esterase. Conversion of dihydromonacolin L into monacolin L and then monacolin J is subsequently performed with the participation of molecular oxygen and P450 monoogygenase mokC. Finally, mokF performs the conversion of monacoline J to monacoline K through the addition of the side-chain diketide moiety (2R)-2-methylbutanoate produced by the diketide synthase mokB. In Monascus pilosus (Red mold), this protein is Esterase mokD.